The primary structure comprises 348 residues: DnaJ homolog subfamily B member 5 (348 aa).

Positions 4 to 68 (DYYKILGIPS…KKRGLYDQYG (65 aa)) constitute a J domain.

This chain is DnaJ homolog subfamily B member 5 (DNAJB5), found in Bos taurus (Bovine).